The primary structure comprises 324 residues: Ribosomal RNA small subunit methyltransferase H (324 aa).

Residues Gly-35–His-37, Asp-55, Phe-85, Asp-103, and Gln-110 each bind S-adenosyl-L-methionine.

This sequence belongs to the methyltransferase superfamily. RsmH family.

It localises to the cytoplasm. The enzyme catalyses cytidine(1402) in 16S rRNA + S-adenosyl-L-methionine = N(4)-methylcytidine(1402) in 16S rRNA + S-adenosyl-L-homocysteine + H(+). Specifically methylates the N4 position of cytidine in position 1402 (C1402) of 16S rRNA. This Solidesulfovibrio magneticus (strain ATCC 700980 / DSM 13731 / RS-1) (Desulfovibrio magneticus) protein is Ribosomal RNA small subunit methyltransferase H.